The following is a 259-amino-acid chain: MNITNINTTRIPAGTRLYLTKKKYNKFYIQPDKTLVNDNLFVAYDVKIGGVIAIPQGTRVLGNWVAESSPSIAVQLQLTKIFLYGSGQNISADSDLVETLVDYNSDEIDCAPYLYKIHHFKSPAGIYRRIVNTKCRSKILTDNNRNSIYLEVNTKEISVVLNEDIIPMPDLSKMPVPQSPSVPTMPSVNNDQPTQKPNKITRNYKPKHQHNYKPNYQPNYQPNYGQNCSNSHSNDYFSDYPTEHSGDSSSYSTYEDDDF.

The tract at residues 171-259 is disordered; it reads LSKMPVPQSP…SYSTYEDDDF (89 aa). The segment covering 179 to 201 has biased composition (polar residues); that stretch reads SPSVPTMPSVNNDQPTQKPNKIT. A compositionally biased stretch (basic residues) spans 202 to 211; the sequence is RNYKPKHQHN. A compositionally biased stretch (polar residues) spans 212–236; sequence YKPNYQPNYQPNYGQNCSNSHSNDY.

It is found in the virion. This is an uncharacterized protein from Acanthamoeba polyphaga (Amoeba).